The following is a 208-amino-acid chain: Large ribosomal subunit protein uL4 (208 aa).

Positions 47-58 (ARAARERSDVAR) are enriched in basic and acidic residues. A disordered region spans residues 47–84 (ARAARERSDVARTGKKFGRQKGGGTARHGDRRAPIFIG).

This sequence belongs to the universal ribosomal protein uL4 family. Part of the 50S ribosomal subunit.

In terms of biological role, one of the primary rRNA binding proteins, this protein initially binds near the 5'-end of the 23S rRNA. It is important during the early stages of 50S assembly. It makes multiple contacts with different domains of the 23S rRNA in the assembled 50S subunit and ribosome. Functionally, forms part of the polypeptide exit tunnel. This chain is Large ribosomal subunit protein uL4, found in Sphingopyxis alaskensis (strain DSM 13593 / LMG 18877 / RB2256) (Sphingomonas alaskensis).